Reading from the N-terminus, the 357-residue chain is Dihydroorotate dehydrogenase (quinone) (357 aa).

Residues 66-70 (AGFDK) and T90 contribute to the FMN site. Position 70 (K70) interacts with substrate. A substrate-binding site is contributed by 115–119 (NRMGF). FMN contacts are provided by N143 and N176. N176 serves as a coordination point for substrate. The active-site Nucleophile is the S179. Residue N181 participates in substrate binding. The FMN site is built by K212 and T240. 241 to 242 (NT) contacts substrate. Residues G264, G293, and 314 to 315 (YT) each bind FMN.

It belongs to the dihydroorotate dehydrogenase family. Type 2 subfamily. Monomer. Requires FMN as cofactor.

The protein resides in the cell membrane. The catalysed reaction is (S)-dihydroorotate + a quinone = orotate + a quinol. Its pathway is pyrimidine metabolism; UMP biosynthesis via de novo pathway; orotate from (S)-dihydroorotate (quinone route): step 1/1. Functionally, catalyzes the conversion of dihydroorotate to orotate with quinone as electron acceptor. The sequence is that of Dihydroorotate dehydrogenase (quinone) from Mycobacterium bovis (strain BCG / Pasteur 1173P2).